Consider the following 273-residue polypeptide: Proteasome subunit beta (273 aa).

A propeptide spans 1–50 (MRKDGARLALPLFDPRHDPGPDFAALVSRDAARTVPTSGDGSLGAQVPHG) (removed in mature form; by autocatalysis). Residue threonine 51 is the Nucleophile of the active site.

It belongs to the peptidase T1B family. As to quaternary structure, the 20S proteasome core is composed of 14 alpha and 14 beta subunits that assemble into four stacked heptameric rings, resulting in a barrel-shaped structure. The two inner rings, each composed of seven catalytic beta subunits, are sandwiched by two outer rings, each composed of seven alpha subunits. The catalytic chamber with the active sites is on the inside of the barrel. Has a gated structure, the ends of the cylinder being occluded by the N-termini of the alpha-subunits. Is capped by the proteasome-associated ATPase, ARC.

It localises to the cytoplasm. The catalysed reaction is Cleavage of peptide bonds with very broad specificity.. It participates in protein degradation; proteasomal Pup-dependent pathway. With respect to regulation, the formation of the proteasomal ATPase ARC-20S proteasome complex, likely via the docking of the C-termini of ARC into the intersubunit pockets in the alpha-rings, may trigger opening of the gate for substrate entry. Interconversion between the open-gate and close-gate conformations leads to a dynamic regulation of the 20S proteasome proteolysis activity. In terms of biological role, component of the proteasome core, a large protease complex with broad specificity involved in protein degradation. In Acidimicrobium ferrooxidans (strain DSM 10331 / JCM 15462 / NBRC 103882 / ICP), this protein is Proteasome subunit beta.